A 111-amino-acid chain; its full sequence is Cytochrome c (111 aa).

An N-acetylserine modification is found at serine 1. Residues cysteine 22, cysteine 25, and histidine 26 each coordinate heme c. Lysine 80 bears the N6,N6,N6-trimethyllysine mark. A heme c-binding site is contributed by methionine 88.

Belongs to the cytochrome c family. Post-translationally, binds 1 heme c group covalently per subunit.

Its subcellular location is the mitochondrion intermembrane space. Functionally, electron carrier protein. The oxidized form of the cytochrome c heme group can accept an electron from the heme group of the cytochrome c1 subunit of cytochrome reductase. Cytochrome c then transfers this electron to the cytochrome oxidase complex, the final protein carrier in the mitochondrial electron-transport chain. The polypeptide is Cytochrome c (Ulva intestinalis (Hollow green nori)).